The following is a 265-amino-acid chain: MPTAPFTVLIPARLASSRLPGKPLADIAGLPMVVRVAQRAGLSGATRCVVAADDESIVAACAAHGVAAVLTRSDHASGSDRLAEACELLGLDGDDIVVNVQGDEPLIAPDLIDAVAALLPQQPSASMGTAAHAIDSLADFTNPNVVKVVCDAQGMAHYFSRAPIPFAREHAGQAWWEAASAAASAAPGHPGFAPLRHIGIYSYRAGFLRSFPQLSPAPTEVLEALEQLRALWHGHRIAVHLTPHAPGPGVDTPEDLERVRARLSA.

It belongs to the KdsB family.

The protein localises to the cytoplasm. It catalyses the reaction 3-deoxy-alpha-D-manno-oct-2-ulosonate + CTP = CMP-3-deoxy-beta-D-manno-octulosonate + diphosphate. It functions in the pathway nucleotide-sugar biosynthesis; CMP-3-deoxy-D-manno-octulosonate biosynthesis; CMP-3-deoxy-D-manno-octulosonate from 3-deoxy-D-manno-octulosonate and CTP: step 1/1. It participates in bacterial outer membrane biogenesis; lipopolysaccharide biosynthesis. Its function is as follows. Activates KDO (a required 8-carbon sugar) for incorporation into bacterial lipopolysaccharide in Gram-negative bacteria. This chain is 3-deoxy-manno-octulosonate cytidylyltransferase, found in Delftia acidovorans (strain DSM 14801 / SPH-1).